The following is a 78-amino-acid chain: DNA-directed RNA polymerase subunit omega (78 aa).

It belongs to the RNA polymerase subunit omega family. As to quaternary structure, in cyanobacteria the RNAP catalytic core is composed of 2 alpha, 1 beta, 1 beta', 1 gamma and 1 omega subunit. When a sigma factor is associated with the core the holoenzyme is formed, which can initiate transcription.

The catalysed reaction is RNA(n) + a ribonucleoside 5'-triphosphate = RNA(n+1) + diphosphate. Promotes RNA polymerase assembly. Latches the N- and C-terminal regions of the beta' subunit thereby facilitating its interaction with the beta and alpha subunits. This is DNA-directed RNA polymerase subunit omega from Nostoc punctiforme (strain ATCC 29133 / PCC 73102).